A 136-amino-acid polypeptide reads, in one-letter code: DNA-directed RNA polymerase subunit omega (136 aa).

Over residues 90 to 102 (SSPAAAAVAPQSS) the composition is skewed to low complexity. The interval 90–136 (SSPAAAAVAPQSSSDDKDVQFDRMSEEDLLRGLENLAPPTETDDEGE) is disordered. Residues 103–120 (SDDKDVQFDRMSEEDLLR) are compositionally biased toward basic and acidic residues.

It belongs to the RNA polymerase subunit omega family. The RNAP catalytic core consists of 2 alpha, 1 beta, 1 beta' and 1 omega subunit. When a sigma factor is associated with the core the holoenzyme is formed, which can initiate transcription.

The enzyme catalyses RNA(n) + a ribonucleoside 5'-triphosphate = RNA(n+1) + diphosphate. Promotes RNA polymerase assembly. Latches the N- and C-terminal regions of the beta' subunit thereby facilitating its interaction with the beta and alpha subunits. This is DNA-directed RNA polymerase subunit omega from Methylorubrum populi (strain ATCC BAA-705 / NCIMB 13946 / BJ001) (Methylobacterium populi).